A 162-amino-acid polypeptide reads, in one-letter code: Cyclic pyranopterin monophosphate synthase (162 aa).

Residues 75–77 and 113–114 contribute to the substrate site; these read LCH and ME. Asp-128 is an active-site residue.

It belongs to the MoaC family. In terms of assembly, homohexamer; trimer of dimers.

It catalyses the reaction (8S)-3',8-cyclo-7,8-dihydroguanosine 5'-triphosphate = cyclic pyranopterin phosphate + diphosphate. It participates in cofactor biosynthesis; molybdopterin biosynthesis. Its function is as follows. Catalyzes the conversion of (8S)-3',8-cyclo-7,8-dihydroguanosine 5'-triphosphate to cyclic pyranopterin monophosphate (cPMP). The sequence is that of Cyclic pyranopterin monophosphate synthase from Burkholderia ambifaria (strain ATCC BAA-244 / DSM 16087 / CCUG 44356 / LMG 19182 / AMMD) (Burkholderia cepacia (strain AMMD)).